Here is a 199-residue protein sequence, read N- to C-terminus: Glycerol-3-phosphate acyltransferase (199 aa).

5 helical membrane passes run 5–25 (AYLLILTAYLLGSICSAIIFC), 54–74 (AAIGVLLFDTLKGSLPVLIAF), 82–102 (AIGLIGLAACLGHIFPIFFQF), 114–134 (VFFSISIIASTTMICAWLIVF), and 154–174 (YIWCFKPEFTFPVALICCLLI).

It belongs to the PlsY family. In terms of assembly, probably interacts with PlsX.

The protein localises to the cell inner membrane. The catalysed reaction is an acyl phosphate + sn-glycerol 3-phosphate = a 1-acyl-sn-glycero-3-phosphate + phosphate. The protein operates within lipid metabolism; phospholipid metabolism. Its function is as follows. Catalyzes the transfer of an acyl group from acyl-phosphate (acyl-PO(4)) to glycerol-3-phosphate (G3P) to form lysophosphatidic acid (LPA). This enzyme utilizes acyl-phosphate as fatty acyl donor, but not acyl-CoA or acyl-ACP. This Haemophilus ducreyi (strain 35000HP / ATCC 700724) protein is Glycerol-3-phosphate acyltransferase.